Consider the following 474-residue polypeptide: 3-isopropylmalate dehydratase large subunit (474 aa).

Cys-353, Cys-414, and Cys-417 together coordinate [4Fe-4S] cluster.

This sequence belongs to the aconitase/IPM isomerase family. LeuC type 1 subfamily. Heterodimer of LeuC and LeuD. [4Fe-4S] cluster is required as a cofactor.

It catalyses the reaction (2R,3S)-3-isopropylmalate = (2S)-2-isopropylmalate. The protein operates within amino-acid biosynthesis; L-leucine biosynthesis; L-leucine from 3-methyl-2-oxobutanoate: step 2/4. Functionally, catalyzes the isomerization between 2-isopropylmalate and 3-isopropylmalate, via the formation of 2-isopropylmaleate. In Xylella fastidiosa (strain 9a5c), this protein is 3-isopropylmalate dehydratase large subunit.